Consider the following 118-residue polypeptide: Non-specific lipid-transfer protein 2A (118 aa).

Residues 1 to 26 (MARAQLVLVALVAAALLLAGPHTTMA) form the signal peptide. 4 disulfide bridges follow: Cys30-Cys77, Cys40-Cys54, Cys55-Cys100, and Cys75-Cys114.

This sequence belongs to the plant LTP family.

Plant non-specific lipid-transfer proteins transfer phospholipids as well as galactolipids across membranes. May play a role in wax or cutin deposition in the cell walls of expanding epidermal cells and certain secretory tissues. This is Non-specific lipid-transfer protein 2A (LTP2-A) from Oryza sativa subsp. japonica (Rice).